The following is a 1073-amino-acid chain: MGTGPGVSGRRAAARPSSELPSPDSQLLWVGGHAHSSDSQVCHHADCQQLHHRGPLNLCETCDSKFHSTLHYDGHVRFDLPPQGSVLARNVSTRSCPPRTSPAADLEEEEEGCTDGKGDRKSAGLKISKKKARRRHTDDPSKECFTLKFDLNVDIETEIVPAMKKKSLGEVLLPVFERKGIALGKVDIYLDQSNTPLSLTFEAYRFGGHYLRVKAKPGDEGKVEQGVKDSKSLSLPALRPSGAGPPVSERVDPQSRRESSLDILAPGRRRKNMSEFLGEAGIPGHEPPAPSSCSLPVGSSGGTSSGINESWKNRAASRFSGFFSSSPSTSAFSREVDKMEQLESKLHAYSLFGLPRMPRRLRFDHDSWEEEEEDDEEDEESSGLRLEDSWRELTDGHEKLTRRQCHQQEAVWELLHTEVSYIRKLRVITNLFLCCLLNLQESGLLCEVEAERLFSNIPEIAKLHRGLWGSVMVPVLEKARRTRALLQPSDFLKGFKMFGSLFKPYIRYCMEEEGCMEYMRGLLRDNDLFRAYVTWAEKHQQCQRLKLSDMLAKPHQRLTKYPLLLKSVLRKTDDPRTKEAIVTMISSVERFIHHVNTCMRQRQERQRLAGVVSRIDAYEVVEGSNDEVDKLLKEFLHLDLTAPMPGTSPEETRQLLLEGSLRMKEGKDSKMDVYCFLFTDLLLVTKAVKKAERTKVIRPPLLVDKIVCRELRDPGSFLLIYLNEFHSAVGAYTFQASSQALCRSWVDTIYNAQNQLQQLRAQLSAQEHPGSQHLQSLEEEEDEQEEEGEESGTSAASSPTILRKSSNSLDSEHCTSDGSTETLAMVVVEPGATLSSPEFEGGPVSSQSDESSLSNTASSVTPTSELLPLGPVDGRSCSMDSAYGTLSPTSLQDFVAPHPVVEPAPVPQTPSPQPSPRLRRRTPVQLLPRPPRLLKSKSEASLLQLLSGTPAARGVPPAPSRSLSELCLISVAPGVRTQRPLQEGGPGWNGPGMCDPCHGPQLSESENRPSHMTGGPADSARRRCREMPSGTMSRVQSEPPSGVSAQHRKLTLAQLYRIRTTLLLNSTLTASEV.

Disordered stretches follow at residues 1-28 (MGTGPGVSGRRAAARPSSELPSPDSQLL), 91-135 (VSTR…ARRR), 217-261 (PGDE…ESSL), 278-309 (GEAGIPGHEPPAPSSCSLPVGSSGGTSSGINE), and 367-388 (SWEEEEEDDEEDEESSGLRLED). 2 stretches are compositionally biased toward basic and acidic residues: residues 217-231 (PGDEGKVEQGVKDSK) and 249-260 (ERVDPQSRRESS). The segment covering 367–381 (SWEEEEEDDEEDEES) has biased composition (acidic residues). The DH domain occupies 406–598 (HQQEAVWELL…ERFIHHVNTC (193 aa)). Residues 654-754 (QLLLEGSLRM…WVDTIYNAQN (101 aa)) enclose the PH domain. Disordered stretches follow at residues 762-818 (QLSA…TSDG), 833-873 (TLSS…GPVD), and 899-925 (PVVEPAPVPQTPSPQPSPRLRRRTPVQ). The span at 777–790 (LEEEEDEQEEEGEE) shows a compositional bias: acidic residues. 2 stretches are compositionally biased toward polar residues: residues 791–809 (SGTSAASSPTILRKSSNSL) and 844–864 (VSSQSDESSLSNTASSVTPTS). At threonine 793 the chain carries Phosphothreonine. Serine 798 carries the post-translational modification Phosphoserine. Over residues 900–915 (VVEPAPVPQTPSPQPS) the composition is skewed to pro residues. At threonine 909 the chain carries Phosphothreonine. Serine 911, serine 936, and serine 941 each carry phosphoserine. The interval 993 to 1046 (MCDPCHGPQLSESENRPSHMTGGPADSARRRCREMPSGTMSRVQSEPPSGVSAQ) is disordered. Over residues 1030–1039 (GTMSRVQSEP) the composition is skewed to polar residues.

In terms of assembly, interacts with GIPC1/synectin and RHOA. In terms of tissue distribution, expressed in neurons and glial cells of the peripheral nervous system, with highest levels of expression in the brain and sciatic nerve endoneurium. Isoform 2 is expressed at detectable levels only in malignant cells.

It is found in the cytoplasm. The protein resides in the perinuclear region. The protein localises to the cell membrane. It localises to the cell junction. Its subcellular location is the cell projection. It is found in the lamellipodium. Functionally, functions as a guanine exchange factor (GEF) for RAB26 and thus regulates autophagy of synaptic vesicles in axon terminal of motoneurons. Involved in the control of neuronal cell differentiation. Plays a role in angiogenesis through regulation of endothelial cells chemotaxis. Also affects the migration, adhesion, and matrix/bone degradation in macrophages and osteoclasts. The chain is Pleckstrin homology domain-containing family G member 5 (Plekhg5) from Mus musculus (Mouse).